The sequence spans 807 residues: Glycerol-3-phosphate acyltransferase (807 aa).

The HXXXXD motif motif lies at 305-310 (CHRSHM).

Belongs to the GPAT/DAPAT family.

The protein localises to the cell inner membrane. It carries out the reaction sn-glycerol 3-phosphate + an acyl-CoA = a 1-acyl-sn-glycero-3-phosphate + CoA. Its pathway is phospholipid metabolism; CDP-diacylglycerol biosynthesis; CDP-diacylglycerol from sn-glycerol 3-phosphate: step 1/3. The chain is Glycerol-3-phosphate acyltransferase from Shigella boydii serotype 18 (strain CDC 3083-94 / BS512).